The following is a 536-amino-acid chain: Multifunctional cytochrome P450 monooxygenase af510 (536 aa).

The chain crosses the membrane as a helical span at residues glutamate 4 to phenylalanine 24. 2 N-linked (GlcNAc...) asparagine glycosylation sites follow: asparagine 210 and asparagine 293. Residue cysteine 448 coordinates heme.

It belongs to the cytochrome P450 family. Requires heme as cofactor.

The protein localises to the membrane. It catalyses the reaction (+)-exo-beta-bergamotene + 2 reduced [NADPH--hemoprotein reductase] + 3 O2 = 5-dehydro-6-demethoxyfumagillol + 2 oxidized [NADPH--hemoprotein reductase] + 3 H2O + 2 H(+). Its pathway is secondary metabolite biosynthesis; terpenoid biosynthesis. Functionally, multifunctional cytochrome P450 monooxygenase; part of the gene cluster that mediates the biosynthesis of fumagillin, a meroterpenoid that has numerous biological activities including irreversible inhibition of human type 2 methionine aminopeptidase (METAP2). Within the pathway, the multifunctional cytochrome P450 monooxygenase af510 acts as a 2,4,6-trichlorophenol monooxygenase that first performs the C-H hydroxylation at the bridgehead C5 position to yield 5R-hydroxyl-beta-trans-bergamotene. Subsequently, a four electron oxidation initiated at C-9 coupled to cleavage of the cyclobutane C5-C8 bond of the bicyclo[3.1.1] core yields the epoxyketone intermediate 5-keto-cordycol. An additional epoxidation reaction also catalyzed by af510 then furnishes the characteristic bisepoxide ketone 5-keto-demethoxyfumagillol. The pathway begins with the conversion of farnesyl pyrophosphate (FPP) to beta-trans-bergamotene by the membrane-bound beta-trans-bergamotene synthase af520. The multifunctional cytochrome P450 monooxygenase af510 then converts beta-trans-bergamotene into 5-keto-demethoxyfumagillol via several oxydation steps. 5-keto-demethoxyfumagillol is then subjected to successive C-6 hydroxylation and O-methylation by the dioxygenase af480 and O-methyltransferase af390-400, respectively, to yield 5-keto-fumagillol, which is then stereoselectively reduced by the keto-reductase af490 to 5R-hydroxy-seco-sesquiterpene. The next step is the polyketide transferase af380-catalyzed transfer of a dodecapentaenoyl group synthesized by the polyketide synthase af370 onto 5R-hydroxy-seco-sesquiterpene which leads to the production of prefumagillin. Finally, oxidative cleavage by the monooxygenase af470 converts prefumagillin to fumagillin. The chain is Multifunctional cytochrome P450 monooxygenase af510 from Aspergillus fumigatus (strain ATCC MYA-4609 / CBS 101355 / FGSC A1100 / Af293) (Neosartorya fumigata).